The chain runs to 305 residues: CRISPR-associated endonuclease Cas1 (305 aa).

Residues 96–278 (SDKLLYQAKL…EDVLAAGEIQ (183 aa)) form a sufficient for cleavage of ssRNA, ssDNA and Holliday junction DNA region. Residues Glu-141, His-208, and Asp-221 each coordinate Mg(2+). The segment at 278–305 (QPPAPPEDAQPVAIPLPVSLGDAGHRSS) is disordered.

This sequence belongs to the CRISPR-associated endonuclease Cas1 family. As to quaternary structure, homodimer. Part of the Cas1-Cas2 complex. Interacts with RecB, RecC, RuvB, CasC and CasE. Forms a hexamer with 2 Cas1 dimers sandwiching a Cas2 dimer. The DNA lies across a flat surface extending from 1 Cas1 dimer, across the Cas2 dimer and contacting the other Cas1 dimer. Only 1 Cas1 protein from each dimer is catalytic, the other interacts with the Cas2 dimer and possibly target DNA. Requires Mg(2+) as cofactor.

The protein resides in the cytoplasm. With respect to regulation, nuclease activity partially inhibited by CasE. In terms of biological role, CRISPR (clustered regularly interspaced short palindromic repeat), is an adaptive immune system that provides protection against mobile genetic elements (viruses, transposable elements and conjugative plasmids). CRISPR clusters contain sequences complementary to antecedent mobile elements and target invading nucleic acids. CRISPR clusters are transcribed and processed into CRISPR RNA (crRNA). The Cas1-Cas2 complex is involved in CRISPR adaptation, the first stage of CRISPR immunity, being required for the addition/removal of CRISPR spacers at the leader end of the CRISPR locus. The Cas1-Cas2 complex introduces staggered nicks into both strands of the CRISPR array near the leader repeat and joins the 5'-ends of the repeat strands with the 3'-ends of the new spacer sequence. Spacer DNA integration requires supercoiled target DNA and 3'-OH ends on the inserted (spacer) DNA and probably initiates with a nucleophilic attack of the C 3'-OH end of the protospacer on the minus strand of the first repeat sequence. Expression of Cas1-Cas2 in a strain lacking both genes permits spacer acquisition. Non-specifically binds DNA; the Cas1-Cas2 complex preferentially binds CRISPR-locus DNA. Highest binding is seen to a dual forked DNA complex with 3'-overhangs and a protospacer-adjacent motif-complement specifically positioned. The protospacer DNA lies across a flat surface extending from 1 Cas1 dimer, across the Cas2 dimer and contacting the other Cas1 dimer; the 23 bp-long ds section of the DNA is bracketed by 1 Tyr-22 from each of the Cas1 dimers. Cas1 cuts within the 3'-overhang, to generate a 33-nucleotide DNA that is probably incorporated into the CRISPR leader by a cut-and-paste mechanism. Cas1 alone endonucleolytically cleaves linear ssRNA, ssDNA and short (34 base) dsDNA as well as branched DNA substrates such as Holliday junctions, replication forks and 5'-flap DNA substrates. In vitro catalyzes a concerted transesterification reaction on branched DNA, as would be expected during integration of protospacers into the CRISPR leader sequence; Cas2 is not required in vitro. This reaction requires a 3'-OH group at the branch point. Genetic interactions suggest Cas1 interacts with components of the RecBC and RuvB DNA repair systems. The chain is CRISPR-associated endonuclease Cas1 (ygbT) from Escherichia coli (strain K12).